A 332-amino-acid chain; its full sequence is 2-hydroxyacid dehydrogenase homolog 1 (332 aa).

NAD(+)-binding positions include 154 to 155 (RI), 233 to 235 (TSR), and D259. The active site involves R235. The active site involves E264. H296 (proton donor) is an active-site residue. 296-299 (HQAF) provides a ligand contact to NAD(+).

Belongs to the D-isomer specific 2-hydroxyacid dehydrogenase family.

It is found in the cytoplasm. The protein resides in the nucleus. In Schizosaccharomyces pombe (strain 972 / ATCC 24843) (Fission yeast), this protein is 2-hydroxyacid dehydrogenase homolog 1.